We begin with the raw amino-acid sequence, 248 residues long: Probable transcriptional regulatory protein Fphi_1565 (248 aa).

It belongs to the TACO1 family.

It localises to the cytoplasm. The protein is Probable transcriptional regulatory protein Fphi_1565 of Francisella philomiragia subsp. philomiragia (strain ATCC 25017 / CCUG 19701 / FSC 153 / O#319-036).